Consider the following 317-residue polypeptide: Prenyl transferase paxC (317 aa).

Residues Lys53 and His86 each contribute to the substrate site. 2 residues coordinate Mg(2+): Asp93 and Asp97. Residues Arg102, Lys186, Thr187, Gln216, Asn223, and Lys233 each contribute to the substrate site.

This sequence belongs to the FPP/GGPP synthase family.

Its pathway is secondary metabolite biosynthesis. Its function is as follows. Prenyl transferase; part of the gene cluster that mediates the biosynthesis of paxalline, a mycotoxin that acts as an inhibitor of mammalian maxi-K channels. PaxG, the geranylgeranyl diphosphate (GGPP) synthase is proposed to catalyze the first step in paxilline biosynthesis. Condensation of indole-3-glycerol phosphate with GGPP by paxC then forms 3-geranylgeranylindole (3-GGI), followed by epoxidation and cyclization of this intermediate (by paxM and paxB) to form paspaline. Paspaline is subsequently converted to 13-desoxypaxilline by paxP, the latter being then converted to paxilline by paxQ. Finally paxilline can be mono- and di-prenylated by paxD. The protein is Prenyl transferase paxC of Penicillium paxilli.